The primary structure comprises 80 residues: MAVGISPGELRELTDEELIERLRESKEELFNLRFQMATGQLNNNRRLRTVRHEIARVYTVLRERELGLASGPGGANGEES.

Belongs to the universal ribosomal protein uL29 family.

This is Large ribosomal subunit protein uL29 (rpmC) from Mycobacterium leprae (strain TN).